A 575-amino-acid chain; its full sequence is MAQISESAAIPRRTANHHGNVWDDDLILSLDSPYGAPAYYERLAKLIEEMKHLLLREMEDSNHDLIRRLQIVDTLECLGIDRHFQHEIKTAALHYVYRCWNEKGIGMGSSDSGSKDLDATALGLRALRLHRYNVSSGVLENFQDENGKFFCNLTGDKRVRSMLSLLRASEISFPGEKVMQEAKAFTREYLTQVLAGSGDVTDVDQSLLREVKYALEFPWYCSAPRWEAKSFIEIYGQNQSWLKSNINQEVLELAKLDFSILQCIHQKEIQCITRWWRDSEIAQLNFYRRRHVELYFWAVTCIFEPEFSPSRIAFAKITTVGAVLDDLYDTHGTLDELKTITEAVRRWDLSLIDDLPNNIKIACQFFFNTANELAVEVVKKQGRDMTALLKATWQRYVESYLQEAEWIETRHVPSFNEYIKNALVSSGMCIVNLIPLLLLGQLLANNIVEQILSPSKIQELSELTIRLIDDIRDFEDEKERGEIASIVECYMKDNPDSTLENALNHIKGILHVSLEELNWEFMKDDSVPLCCKKFTFNIVRGLQFLYKYGDGISISNKEVKDQIFKILVDQIPIED.

Residues Asp325, Asp329, Asp469, and Glu477 each contribute to the Mg(2+) site. The short motif at 325–329 (DDLYD) is the DDXXD motif element.

The protein belongs to the terpene synthase family. Tpsa subfamily. It depends on Mg(2+) as a cofactor. Mn(2+) serves as cofactor.

The enzyme catalyses (2E,6E)-farnesyl diphosphate = alpha-humulene + diphosphate. It participates in sesquiterpene biosynthesis. Its pathway is terpene metabolism; oleoresin biosynthesis. Terpene synthase (TPS) involved in the biosynthesis of sesquiterpene natural products included in conifer oleoresin secretions and volatile emissions; these compounds contribute to biotic and abiotic stress defense against herbivores and pathogens. Catalyzes the conversion of (2E,6E)-farnesyl diphosphate (FPP) to (1E,4E,8E)-alpha-humulene. This Picea glauca (White spruce) protein is Alpha-humulene synthase.